A 513-amino-acid chain; its full sequence is ATP synthase subunit alpha (513 aa).

G169 to T176 contributes to the ATP binding site.

The protein belongs to the ATPase alpha/beta chains family. In terms of assembly, F-type ATPases have 2 components, CF(1) - the catalytic core - and CF(0) - the membrane proton channel. CF(1) has five subunits: alpha(3), beta(3), gamma(1), delta(1), epsilon(1). CF(0) has three main subunits: a(1), b(2) and c(9-12). The alpha and beta chains form an alternating ring which encloses part of the gamma chain. CF(1) is attached to CF(0) by a central stalk formed by the gamma and epsilon chains, while a peripheral stalk is formed by the delta and b chains.

The protein resides in the cell inner membrane. It catalyses the reaction ATP + H2O + 4 H(+)(in) = ADP + phosphate + 5 H(+)(out). Produces ATP from ADP in the presence of a proton gradient across the membrane. The alpha chain is a regulatory subunit. This is ATP synthase subunit alpha from Klebsiella pneumoniae (strain 342).